Here is a 473-residue protein sequence, read N- to C-terminus: Zinc finger and SCAN domain-containing protein 21 (473 aa).

A Glycyl lysine isopeptide (Lys-Gly) (interchain with G-Cter in SUMO2) cross-link involves residue Lys27. Positions Arg45 to Leu127 constitute an SCAN box domain. Positions Leu127–Ser169 are disordered. The span at Ile148 to Glu167 shows a compositional bias: polar residues. Glycyl lysine isopeptide (Lys-Gly) (interchain with G-Cter in SUMO2) cross-links involve residues Lys221 and Lys232. The segment at Leu244–Pro272 is disordered. A compositionally biased stretch (basic and acidic residues) spans Gly258–Pro272. 7 C2H2-type zinc fingers span residues Tyr277–His299, Tyr305–His327, Tyr333–His354, Tyr360–His382, Tyr388–His410, Tyr416–His438, and Tyr444–His466. Residue Lys349 forms a Glycyl lysine isopeptide (Lys-Gly) (interchain with G-Cter in SUMO2) linkage.

The protein belongs to the krueppel C2H2-type zinc-finger protein family.

The protein localises to the nucleus. Its function is as follows. Strong transcriptional activator. Plays an important role in spermatogenesis; essential for the progression of meiotic prophase I in spermatocytes. The chain is Zinc finger and SCAN domain-containing protein 21 (ZSCAN21) from Homo sapiens (Human).